The primary structure comprises 464 residues: Argininosuccinate lyase (464 aa).

Belongs to the lyase 1 family. Argininosuccinate lyase subfamily.

It is found in the cytoplasm. The enzyme catalyses 2-(N(omega)-L-arginino)succinate = fumarate + L-arginine. Its pathway is amino-acid biosynthesis; L-arginine biosynthesis; L-arginine from L-ornithine and carbamoyl phosphate: step 3/3. The sequence is that of Argininosuccinate lyase from Pseudomonas putida (strain W619).